Here is a 480-residue protein sequence, read N- to C-terminus: Flap endonuclease 1 (480 aa).

The segment at 1 to 106 (MGIKGLTKFI…SELEKRGEKR (106 aa)) is N-domain. Asp-34 is a binding site for Mg(2+). DNA-binding residues include Arg-47 and Arg-72. Residues Asp-88, Glu-160, Glu-162, Asp-181, and Asp-183 each contribute to the Mg(2+) site. The interval 124–266 (EIKKQSGRTV…KTAYNLIKEY (143 aa)) is I-domain. Glu-160 contacts DNA. DNA-binding residues include Gly-244 and Asp-246. Mg(2+) is bound at residue Asp-246. Residues 349-357 (TQRRLDTFF) are interaction with PCNA. Positions 379–461 (TKGKGKKREI…NIKNENVKED (83 aa)) are disordered. A compositionally biased stretch (basic and acidic residues) spans 404–428 (NVKDEKKNNEKVDELKNKSDENLVK). Residues 429-438 (DEEDDQDDYD) are compositionally biased toward acidic residues.

This sequence belongs to the XPG/RAD2 endonuclease family. FEN1 subfamily. In terms of assembly, interacts with PCNA. Three molecules of FEN1 bind to one PCNA trimer with each molecule binding to one PCNA monomer. PCNA stimulates the nuclease activity without altering cleavage specificity. Mg(2+) serves as cofactor. Phosphorylated. Phosphorylation upon DNA damage induces relocalization to the nuclear plasma.

Its subcellular location is the nucleus. The protein resides in the nucleolus. It is found in the nucleoplasm. The protein localises to the mitochondrion. Its activity is regulated as follows. Inhibited by monovalent metal ions. Structure-specific nuclease with 5'-flap endonuclease and 5'-3' exonuclease activities involved in DNA replication and repair. During DNA replication, cleaves the 5'-overhanging flap structure that is generated by displacement synthesis when DNA polymerase encounters the 5'-end of a downstream Okazaki fragment. It enters the flap from the 5'-end and then tracks to cleave the flap base, leaving a nick for ligation. Also involved in the long patch base excision repair (LP-BER) pathway, by cleaving within the apurinic/apyrimidinic (AP) site-terminated flap. Acts as a genome stabilization factor that prevents flaps from equilibrating into structures that lead to duplications and deletions. Also possesses 5'-3' exonuclease activity on nicked or gapped double-stranded DNA, and exhibits RNase H activity. Also involved in replication and repair of rDNA and in repairing mitochondrial DNA. The protein is Flap endonuclease 1 of Plasmodium yoelii yoelii.